The primary structure comprises 347 residues: Quinolinate synthase (347 aa).

Iminosuccinate is bound by residues His47 and Ser68. Residue Cys113 coordinates [4Fe-4S] cluster. Iminosuccinate is bound by residues Tyr139–Asn141 and Ser156. Cys200 is a [4Fe-4S] cluster binding site. Residues His226–Glu228 and Thr243 contribute to the iminosuccinate site. Residue Cys297 participates in [4Fe-4S] cluster binding.

The protein belongs to the quinolinate synthase family. Type 1 subfamily. It depends on [4Fe-4S] cluster as a cofactor.

The protein resides in the cytoplasm. It carries out the reaction iminosuccinate + dihydroxyacetone phosphate = quinolinate + phosphate + 2 H2O + H(+). Its pathway is cofactor biosynthesis; NAD(+) biosynthesis; quinolinate from iminoaspartate: step 1/1. Catalyzes the condensation of iminoaspartate with dihydroxyacetone phosphate to form quinolinate. The chain is Quinolinate synthase from Salmonella choleraesuis (strain SC-B67).